The following is a 605-amino-acid chain: Isocitrate dehydrogenase kinase/phosphatase (605 aa).

ATP contacts are provided by residues 327-333 and lysine 348; that span reads APGIKGL. Aspartate 383 is a catalytic residue.

Belongs to the AceK family.

The protein localises to the cytoplasm. It catalyses the reaction L-seryl-[isocitrate dehydrogenase] + ATP = O-phospho-L-seryl-[isocitrate dehydrogenase] + ADP + H(+). Functionally, bifunctional enzyme which can phosphorylate or dephosphorylate isocitrate dehydrogenase (IDH) on a specific serine residue. This is a regulatory mechanism which enables bacteria to bypass the Krebs cycle via the glyoxylate shunt in response to the source of carbon. When bacteria are grown on glucose, IDH is fully active and unphosphorylated, but when grown on acetate or ethanol, the activity of IDH declines drastically concomitant with its phosphorylation. The protein is Isocitrate dehydrogenase kinase/phosphatase of Burkholderia orbicola (strain AU 1054).